The chain runs to 446 residues: Questin oxidase (446 aa).

This sequence belongs to the questin oxidase family.

The enzyme catalyses questin + NADPH + O2 = demethylsulochrin + NADP(+). Its pathway is secondary metabolite biosynthesis. Its function is as follows. Questin oxidase; part of the gene cluster that mediates the biosynthesis of geodin, an intermediate in the biosynthesis of other natural products. The pathway begins with the synthesis of atrochrysone thioester by the polyketide synthase (PKS) gedC. The atrochrysone carboxyl ACP thioesterase gedB then breaks the thioester bond and releases the atrochrysone carboxylic acid from gedC. The atrochrysone carboxylic acid is then converted to atrochrysone which is further transformed into emodinanthrone. The next step is performed by the emodinanthrone oxygenase gedH that catalyzes the oxidation of emodinanthrone to emodin. Emodin O-methyltransferase encoded probably by gedA then catalyzes methylation of the 8-hydroxy group of emodin to form questin. Ring cleavage of questin by questin oxidase gedK leads to desmethylsulochrin via several intermediates including questin epoxide. Another methylation step probably catalyzed by methyltransferase gedG leads to the formation of sulochrin which is further converted to dihydrogeodin by the sulochrin halogenase gedL. Finally, the dihydrogeodin oxidase gedJ catalyzes the stereospecific phenol oxidative coupling reaction converting dihydrogeodin to geodin. In Aspergillus terreus (strain NIH 2624 / FGSC A1156), this protein is Questin oxidase.